The primary structure comprises 78 residues: Translation initiation factor IF-1, chloroplastic (78 aa).

The 73-residue stretch at M1–R73 folds into the S1-like domain.

It belongs to the IF-1 family. As to quaternary structure, component of the 30S ribosomal translation pre-initiation complex which assembles on the 30S ribosome in the order IF-2 and IF-3, IF-1 and N-formylmethionyl-tRNA(fMet); mRNA recruitment can occur at any time during PIC assembly.

Its subcellular location is the plastid. It localises to the chloroplast. Functionally, one of the essential components for the initiation of protein synthesis. Stabilizes the binding of IF-2 and IF-3 on the 30S subunit to which N-formylmethionyl-tRNA(fMet) subsequently binds. Helps modulate mRNA selection, yielding the 30S pre-initiation complex (PIC). Upon addition of the 50S ribosomal subunit IF-1, IF-2 and IF-3 are released leaving the mature 70S translation initiation complex. This is Translation initiation factor IF-1, chloroplastic from Ostreococcus tauri.